Here is a 173-residue protein sequence, read N- to C-terminus: Protein C2 (173 aa).

A zinc finger lies at 69 to 85 (CNCHFTIHHECNRGFSH).

It belongs to the geminiviridae transcriptional activator protein family. Monomer. Interacting with and inactivating host adenosine kinase 2 (ADK2) in the cytoplasm. Interacts with and inhibits host SNF1 kinase.

Its subcellular location is the host cytoplasm. In terms of biological role, acts as a suppressor of RNA-mediated gene silencing, also known as post-transcriptional gene silencing (PTGS), a mechanism of plant viral defense that limits the accumulation of viral RNAs. Suppresses the host RNA silencing by inhibiting adenosine kinase 2 (ADK2), a kinase involved in a general methylation pathway. Also suppresses the host basal defense by interacting with and inhibiting SNF1 kinase, a key regulator of cell metabolism implicated in innate antiviral defense. Determines pathogenicity. This is Protein C2 from Beet curly top virus (strain California/Logan) (BCTV).